The primary structure comprises 485 residues: Glutamyl-tRNA(Gln) amidotransferase subunit A (485 aa).

Residues K78 and S153 each act as charge relay system in the active site. S177 (acyl-ester intermediate) is an active-site residue.

This sequence belongs to the amidase family. GatA subfamily. In terms of assembly, heterotrimer of A, B and C subunits.

It carries out the reaction L-glutamyl-tRNA(Gln) + L-glutamine + ATP + H2O = L-glutaminyl-tRNA(Gln) + L-glutamate + ADP + phosphate + H(+). Its function is as follows. Allows the formation of correctly charged Gln-tRNA(Gln) through the transamidation of misacylated Glu-tRNA(Gln) in organisms which lack glutaminyl-tRNA synthetase. The reaction takes place in the presence of glutamine and ATP through an activated gamma-phospho-Glu-tRNA(Gln). This is Glutamyl-tRNA(Gln) amidotransferase subunit A from Bacillus mycoides (strain KBAB4) (Bacillus weihenstephanensis).